The chain runs to 112 residues: UPF0212 protein Mhun_0078 (112 aa).

Belongs to the UPF0212 family.

This Methanospirillum hungatei JF-1 (strain ATCC 27890 / DSM 864 / NBRC 100397 / JF-1) protein is UPF0212 protein Mhun_0078.